A 94-amino-acid chain; its full sequence is Small ribosomal subunit protein uS19 (94 aa).

Belongs to the universal ribosomal protein uS19 family.

Protein S19 forms a complex with S13 that binds strongly to the 16S ribosomal RNA. The polypeptide is Small ribosomal subunit protein uS19 (Moorella thermoacetica (strain ATCC 39073 / JCM 9320)).